The sequence spans 81 residues: CLAVATA3/ESR (CLE)-related protein 5 (81 aa).

The first 26 residues, 1–26, serve as a signal peptide directing secretion; that stretch reads MATLILKQTLIILLIIFSLQTLSSQA. A hydroxyproline mark is found at P73 and P76. O-linked (Ara...) hydroxyproline glycosylation is present at P76.

This sequence belongs to the CLV3/ESR signal peptide family. The O-glycosylation (arabinosylation) of the hydroxyproline Pro-76 enhances binding affinity of the CLE5p peptide for its receptor. As to expression, mostly expressed in roots, and, to a lower extent, in seedlings, stems, apex, flowers and siliques.

Its subcellular location is the secreted. The protein localises to the extracellular space. In terms of biological role, extracellular signal peptide that regulates cell fate. This Arabidopsis thaliana (Mouse-ear cress) protein is CLAVATA3/ESR (CLE)-related protein 5.